We begin with the raw amino-acid sequence, 129 residues long: MSDSIFPINPDAALAIHVALSAGIVAAIIVVAALLREKRAGARPDVPYEGGVLPAAPQQGPINAPYFLIAALFVIFDMEVAILFAWAVAARDTGWFGLIEAAVFIGVLLLALVYLWADGALDWHKERKR.

A run of 3 helical transmembrane segments spans residues 14–34, 67–87, and 95–115; these read LAIHVALSAGIVAAIIVVAAL, FLIAALFVIFDMEVAILFAWA, and WFGLIEAAVFIGVLLLALVYL.

It belongs to the complex I subunit 3 family. NDH-1 is composed of 14 different subunits. Subunits NuoA, H, J, K, L, M, N constitute the membrane sector of the complex.

The protein localises to the cell inner membrane. It carries out the reaction a quinone + NADH + 5 H(+)(in) = a quinol + NAD(+) + 4 H(+)(out). NDH-1 shuttles electrons from NADH, via FMN and iron-sulfur (Fe-S) centers, to quinones in the respiratory chain. The immediate electron acceptor for the enzyme in this species is believed to be ubiquinone. Couples the redox reaction to proton translocation (for every two electrons transferred, four hydrogen ions are translocated across the cytoplasmic membrane), and thus conserves the redox energy in a proton gradient. This Rhodopseudomonas palustris (strain HaA2) protein is NADH-quinone oxidoreductase subunit A.